A 192-amino-acid polypeptide reads, in one-letter code: Ribonuclease HII (192 aa).

The 186-residue stretch at 2 to 187 (KNLCGIDEAG…KALGENEIGV (186 aa)) folds into the RNase H type-2 domain. Residues Asp8, Glu9, and Asp97 each contribute to the a divalent metal cation site.

Belongs to the RNase HII family. Mn(2+) serves as cofactor. It depends on Mg(2+) as a cofactor.

Its subcellular location is the cytoplasm. The catalysed reaction is Endonucleolytic cleavage to 5'-phosphomonoester.. Functionally, endonuclease that specifically degrades the RNA of RNA-DNA hybrids. The chain is Ribonuclease HII from Aliarcobacter butzleri (strain RM4018) (Arcobacter butzleri).